Here is a 412-residue protein sequence, read N- to C-terminus: Small ribosomal subunit protein mL103 (rPPR7) (412 aa).

The transit peptide at 1 to 14 (MASSRISLRLVRRF) directs the protein to the mitochondrion. The segment covering 21 to 37 (GTTTAPSSGKISVSKAK) has biased composition (polar residues). Positions 21 to 43 (GTTTAPSSGKISVSKAKSTLRKE) are disordered. PPR repeat units lie at residues 101 to 135 (EEPF…GTPR), 136 to 166 (SAVS…IPQR), 173 to 207 (DKIS…GMEV), 208 to 242 (TTIA…GCEL), 243 to 276 (DNAA…GLKP), 277 to 311 (DTIS…NCAP), 312 to 346 (NAAT…HKIP), and 347 to 377 (DFNT…VKKK).

This sequence belongs to the PPR family. P subfamily. As to quaternary structure, component of the mitochondrial ribosome small subunit.

It is found in the mitochondrion. This Arabidopsis thaliana (Mouse-ear cress) protein is Small ribosomal subunit protein mL103 (rPPR7).